Reading from the N-terminus, the 363-residue chain is Protein arginine N-methyltransferase 2 (363 aa).

2 ANK repeats span residues 22-46 (AAQT…FQDD) and 48-80 (LGWS…AVDK). The RMT2 domain maps to 111–363 (KTSAGDNLVF…RLPIAKMSLI (253 aa)). S-adenosyl-L-methionine contacts are provided by residues phenylalanine 120, 186–191 (FGLGIV), 209–211 (EAH), 236–237 (WQ), and aspartate 265.

It belongs to the class I-like SAM-binding methyltransferase superfamily. RMT2 methyltransferase family. Monomer.

The protein resides in the cytoplasm. The protein localises to the nucleus. In terms of biological role, S-adenosyl-L-methionine-dependent protein-arginine N-methyltransferase that methylates the delta-nitrogen atom of arginine residues to form N5-methylarginine (type IV) in target proteins. Monomethylates ribosomal protein L12. This Cryptococcus neoformans var. neoformans serotype D (strain B-3501A) (Filobasidiella neoformans) protein is Protein arginine N-methyltransferase 2.